Consider the following 144-residue polypeptide: Large ribosomal subunit protein uL16 (144 aa).

It belongs to the universal ribosomal protein uL16 family. As to quaternary structure, part of the 50S ribosomal subunit.

Functionally, binds 23S rRNA and is also seen to make contacts with the A and possibly P site tRNAs. The polypeptide is Large ribosomal subunit protein uL16 (Bacillus anthracis (strain A0248)).